A 525-amino-acid chain; its full sequence is 2,3-bisphosphoglycerate-independent phosphoglycerate mutase 2 (525 aa).

Positions 14 and 64 each coordinate Mn(2+). Ser-64 serves as the catalytic Phosphoserine intermediate. Residues His-125, 155–156, Arg-187, Arg-193, 274–277, and Lys-347 each bind substrate; these read RD and RADR. Residues Asp-414, His-418, Asp-455, His-456, and His-474 each contribute to the Mn(2+) site.

Belongs to the BPG-independent phosphoglycerate mutase family. Mn(2+) is required as a cofactor.

It carries out the reaction (2R)-2-phosphoglycerate = (2R)-3-phosphoglycerate. Its pathway is carbohydrate degradation; glycolysis; pyruvate from D-glyceraldehyde 3-phosphate: step 3/5. Functionally, catalyzes the interconversion of 2-phosphoglycerate and 3-phosphoglycerate. The chain is 2,3-bisphosphoglycerate-independent phosphoglycerate mutase 2 from Methanosarcina barkeri (strain Fusaro / DSM 804).